Consider the following 394-residue polypeptide: Acryloyl-CoA reductase (NADH) (394 aa).

FAD is bound by residues 135–144 and 170–172; these read FALTEPNAGS and FIS. Residue S144 coordinates substrate. 254 to 257 contributes to the substrate binding site; that stretch reads DGAR. FAD contacts are provided by residues R282, Q293, and 350 to 354; that span reads QIHGG. Residue E377 is the Proton acceptor of the active site. G378 lines the substrate pocket. FAD is bound at residue 379–381; the sequence is TSE.

As to quaternary structure, heterohexadecamer; tetramer of tetramers. Each tetramer is composed of 2 alpha (AcrC), a beta (AcrA) and a gamma (AcrB) subunit. Requires FAD as cofactor.

The protein localises to the cytoplasm. It catalyses the reaction propanoyl-CoA + NAD(+) = acryloyl-CoA + NADH + H(+). Functionally, probable catalytic subunit of the acryloyl-CoA reductase complex involved in the pathway of L-alanine fermentation. Catalyzes the irreversible NADH-dependent formation of propionyl-CoA from acryloyl-CoA. It can also use 3-buten-2-one as substrate. This is Acryloyl-CoA reductase (NADH) (acrC) from Anaerotignum propionicum (Clostridium propionicum).